The following is a 365-amino-acid chain: Phosphatidylcholine:ceramide cholinephosphotransferase 4 (365 aa).

Over 1–44 (MISYPFFSLSPPGLVPPPMAVPPVEMYSGSFWNRMRKPLPLRTQ) the chain is Cytoplasmic. A helical transmembrane segment spans residues 45 to 65 (VIRFTVVFVIVSFILAVALQI). Topologically, residues 66–92 (THERMPDPKVTKPLPDLGFELLTKVPG) are lumenal. Residues 93-113 (MYVLADCCIGFLNILSVFTAF) form a helical membrane-spanning segment. Over 114 to 165 (KLYLLHRHCVGSGEPELPCNIPGVSRFFLSVWLCKENCRIELRNIHTIAWIR) the chain is Cytoplasmic. A helical membrane pass occupies residues 166 to 186 (FITSYALLLLFRSAVIVMTSL). Residues 187–229 (PAPDDLCQDPPKIENPVKNVILTVLTAGGGSIHCGDLMYSGHT) are Lumenal-facing. His-228 is an active-site residue. A helical membrane pass occupies residues 230–250 (VILTLHLMFHWIYGAMVHWSF). Residue Arg-251 is a topological domain, cytoplasmic. Residues 252–272 (PVVTVVAIFGYYCIVASRFHY) traverse the membrane as a helical segment. Active-site residues include His-271 and Asp-275. Residues 273 to 275 (TDD) are Lumenal-facing. Residues 276-296 (VLVAIYLTIATFIAVGHNADG) form a helical membrane-spanning segment. Over 297–365 (APWQLQLFIR…SLMFKCGAYV (69 aa)) the chain is Cytoplasmic.

It belongs to the sphingomyelin synthase family.

The protein localises to the golgi apparatus membrane. It carries out the reaction an N-acylsphing-4-enine + a 1,2-diacyl-sn-glycero-3-phosphocholine = a sphingomyelin + a 1,2-diacyl-sn-glycerol. The enzyme catalyses an N-acylsphinganine + a 1,2-diacyl-sn-glycero-3-phosphocholine = an N-acylsphinganine-1-phosphocholine + a 1,2-diacyl-sn-glycerol. It catalyses the reaction an N-acylsphing-4-enine + a 1,2-diacyl-sn-glycero-3-phosphoethanolamine = an N-acylsphing-4-enine 1-phosphoethanolamine + a 1,2-diacyl-sn-glycerol. The catalysed reaction is an N-acylsphinganine + a 1,2-diacyl-sn-glycero-3-phosphoethanolamine = an N-acylsphinganine-1-phosphoethanolamine + a 1,2-diacyl-sn-glycerol. It carries out the reaction a 1,2-diacyl-sn-glycero-3-phospho-(1D-myo-inositol) + an N-acylsphing-4-enine = an N-acylsphing-4-enine-(1D-myo-inositol) + a 1,2-diacyl-sn-glycerol. The enzyme catalyses an N-acylsphinganine + a 1,2-diacyl-sn-glycero-3-phospho-(1D-myo-inositol) = an N-acylsphinganine-(1D-myo-inositol) + a 1,2-diacyl-sn-glycerol. Its function is as follows. Bifunctional sphingomyelin (SM)/ethanolamine phosphorylceramide (EPC) synthase with minimal inositol phosphorylceramide (IPC) synthase activity. Specificity is likely to be defined by residues in the lumenal catalytic domain that interact with the polar head groups of the phospholipid donors. SM is synthesized by both stages of the parasite life cycle, bloodstream forms (BSF) and procyclic forms (PCF), by transferring the phosphoryl headgroup from a 1,2-diacyl-sn-glycero-3-phosphocholine to an N-acylsphing-4-enine (ceramide) or an N-acylsphinganine (dihydroceramide) with release of 1,2-diacyl-sn-glycerol. Also catalyzes the reverse reaction, production of ceramide from sphingomyelin. EPC is synthesized by transferring phosphoethanolamine from a 1,2-diacyl-sn-glycero-3-phosphoethanolamine to ceramide or dihydroceramide by BSF and PCF, while IPC is confined to PCF. The ceramide/dihydroceramide ratios are skewed towards dihydroceramide in PCF parasites and ceramide in BSF parasites, this is likely due to differential expression and/or regulation of dihydroceramide desaturase, the enzyme responsible for converting dihydroceramide to ceramide. This chain is Phosphatidylcholine:ceramide cholinephosphotransferase 4, found in Trypanosoma brucei brucei.